The sequence spans 832 residues: Thymine dioxygenase JBP1-A (832 aa).

The span at 1 to 12 shows a compositional bias: basic and acidic residues; sequence MKQKRGKQDVKM. The tract at residues 1–24 is disordered; that stretch reads MKQKRGKQDVKMLESAPPQLLPKK. The segment at 80-282 is thymine dioxygenase; sequence VVGGVFLPGA…RLTCVCYYRA (203 aa). The Fe cation site is built by H207, D209, and H257. R273 provides a ligand contact to 2-oxoglutarate. The segment at 409-578 is DNA-binding JBP1 domain; the sequence is LGGALKAAEE…IEEARRRGSS (170 aa).

This sequence belongs to the TET family. JBP1 subfamily. Monomer. Binds to DNA as a monomer. Fe(2+) serves as cofactor.

It is found in the nucleus. The catalysed reaction is thymine + 2-oxoglutarate + O2 = 5-hydroxymethyluracil + succinate + CO2. In terms of biological role, dioxygenase that catalyzes the first step of DNA base J (beta-d-glucosyl-HOMedU) biosynthesis by converting thymine to 5-hydroxymethyluracil (HOMedU). DNA base J is a hypermodified thymidine residue found in the genome of kinetoplastid parasites, which is localized primarily to repetitive DNA, namely the telomeres, and is implicated in the regulation of antigenic variation. Also specifically binds to base J-containing DNA (J-DNA). Involved in propagation and maintenance of DNA base J synthesis initiated by JBP2 by specifically binding already synthesized DNA base J and propagating J synthesis. Thymine dioxygenase activity and J-DNA-binding are independent functions. The polypeptide is Thymine dioxygenase JBP1-A (JBP1A) (Trypanosoma cruzi (strain CL Brener)).